A 423-amino-acid polypeptide reads, in one-letter code: MALLQSRLLLSAPRRAAATARASSWWSHVEMGPPDPILGVTEAFKRDTNSKKMNLGVGAYRDDNGKSYVLNCVRKAEAMIAAKKMDKEYLPIAGLADFTRASAELALGENSEAFKSGRYVTVQGISGTGSLRVGANFLQRFFKFSRDVYLPKPSWGNHTPIFRDAGLQLQAYRYYDPKTCSLDFTGAMEDISKIPEKSIILLHACAHNPTGVDPRQEQWKELASVVKKRNLLAYFDMAYQGFASGDINRDAWALRHFIEQGIDVVLSQSYAKNMGLYGERAGAFTVICRDAEEAKRVESQLKILIRPMYSNPPMNGARIASLILNTPELRKEWLVEVKGMADRIISMRTQLVSNLKKEGSSHNWQHITDQIGMFCFTGLKPEQVERLTKEFSIYMTKDGRISVAGVASSNVGYLAHAIHQVTK.

The transit peptide at 1–22 (MALLQSRLLLSAPRRAAATARA) directs the protein to the mitochondrion. Substrate contacts are provided by Gly58, Trp155, and Asn208. Lys272 bears the N6-(pyridoxal phosphate)lysine mark. Arg400 is a substrate binding site.

The protein belongs to the class-I pyridoxal-phosphate-dependent aminotransferase family. As to quaternary structure, homodimer. Requires pyridoxal 5'-phosphate as cofactor. In terms of tissue distribution, detected in heart (at protein level).

Its subcellular location is the mitochondrion matrix. It carries out the reaction L-aspartate + 2-oxoglutarate = oxaloacetate + L-glutamate. The catalysed reaction is L-kynurenine + 2-oxoglutarate = kynurenate + L-glutamate + H2O. Its function is as follows. Catalyzes the irreversible transamination of the L-tryptophan metabolite L-kynurenine to form kynurenic acid (KA). As a member of the malate-aspartate shuttle, it has a key role in the intracellular NAD(H) redox balance. Is important for metabolite exchange between mitochondria and cytosol, and for amino acid metabolism. This Gallus gallus (Chicken) protein is Aspartate aminotransferase, mitochondrial (GOT2).